A 1268-amino-acid polypeptide reads, in one-letter code: SR-related and CTD-associated factor 8 (1268 aa).

The CID domain maps to 1 to 139 (MEAVKTFNSE…PLLDMAAGIP (139 aa)). Phosphothreonine is present on T6. K18 participates in a covalent cross-link: Glycyl lysine isopeptide (Lys-Gly) (interchain with G-Cter in SUMO1). S273 bears the Phosphoserine mark. 2 disordered regions span residues 322-355 (QQQP…QQHF) and 385-469 (EIFE…PVRS). Over residues 342 to 354 (HSASPSQGSSQQH) the composition is skewed to polar residues. A compositionally biased stretch (basic residues) spans 394 to 443 (VAVRSRSRTHSRSRSRSPRKRRSRSRSGSRKRKHRKRSRSRSRERKRKSS). Over residues 447 to 461 (SSERRAREREKERQK) the composition is skewed to basic and acidic residues. Positions 477–551 (TTLWVGQVDK…KVIKIAWALN (75 aa)) constitute an RRM domain. T615 carries the post-translational modification Phosphothreonine. A Phosphoserine modification is found at S617. The segment at 753–808 (AGNVFNPPSKAEPEEKVPHLTEHQIPSGENTRPVIPSDIPSSAPMLAQPPGASNTS) is disordered. Residues 763–774 (AEPEEKVPHLTE) are compositionally biased toward basic and acidic residues. 3 positions are modified to asymmetric dimethylarginine: R915, R925, and R936. The segment at 947 to 1063 (QRGIPPPSVL…GRDHFGRPPV (117 aa)) is disordered. Pro residues predominate over residues 961 to 970 (HPPPRGPFPP). Basic and acidic residues-rich tracts occupy residues 1009–1025 (EGDR…REGI) and 1032–1063 (DVRD…RPPV). R1071 bears the Asymmetric dimethylarginine mark. The disordered stretch occupies residues 1199–1268 (ATSQRKGENV…VVESTETEGT (70 aa)). A compositionally biased stretch (low complexity) spans 1249 to 1262 (GTAAGVESEAVVES).

Interacts with POLR2A; via C-terminal heptapeptide repeat domain (CTD) phosphorylated at 'Ser-2' and 'Ser-5'. Identified in a complex with CDC5L and other spliceosomal proteins.

The protein localises to the nucleus. The protein resides in the nucleus matrix. Functionally, anti-terminator protein required to prevent early mRNA termination during transcription. Together with SCAF4, acts by suppressing the use of early, alternative poly(A) sites, thereby preventing the accumulation of non-functional truncated proteins. Mechanistically, associates with the phosphorylated C-terminal heptapeptide repeat domain (CTD) of the largest RNA polymerase II subunit (POLR2A), and subsequently binds nascent RNA upstream of early polyadenylation sites to prevent premature mRNA transcript cleavage and polyadenylation. Independently of SCAF4, also acts as a positive regulator of transcript elongation. This Rattus norvegicus (Rat) protein is SR-related and CTD-associated factor 8.